A 494-amino-acid polypeptide reads, in one-letter code: WD repeat-containing protein 37 (494 aa).

The disordered stretch occupies residues Met-1–Leu-38. Polar residues predominate over residues Ser-22–Ser-31. WD repeat units lie at residues Gly-154–Lys-194 and Gly-197–Gln-236. Residues Gln-236–Asp-266 form a disordered region. Residues Gly-245–Ala-263 show a composition bias toward acidic residues. 5 WD repeats span residues Ser-279–Ser-318, Gly-321–Val-360, Gly-365–Ala-403, Arg-406–Leu-445, and Gly-452–Glu-493.

It localises to the cytoplasm. Its subcellular location is the nucleus. The chain is WD repeat-containing protein 37 (wdr37) from Xenopus tropicalis (Western clawed frog).